Here is a 685-residue protein sequence, read N- to C-terminus: Eukaryotic peptide chain release factor GTP-binding subunit (685 aa).

Disordered stretches follow at residues 1 to 34 (MSDS…GYQA), 63 to 99 (YNPD…GGRG), and 112 to 234 (GYQA…NVTS). N-acetylserine is present on serine 2. The interval 2 to 239 (SDSNQGNNQQ…ANVTSADALI (238 aa)) is interaction with PAB1. The tract at residues 5 to 135 (NQGNNQQNYQ…LNDFQKQQKQ (131 aa)) is prion domain (PrD). Residues 117–129 (FQPQSQGMSLNDF) are compositionally biased toward polar residues. A charged region spans residues 139–249 (KPKKTLKLVS…KEQEEEVDDE (111 aa)). The span at 166 to 222 (AESDKKEEEKSAETKEPTKEPTKVEEPVKKEEKPVQTEEKTEEKSELPKVEDLKISE) shows a compositional bias: basic and acidic residues. Polar residues predominate over residues 223 to 234 (STHNTNNANVTS). Residues 258-484 (KDHVSLIFMG…YLDTMNHVDR (227 aa)) form the tr-type G domain. Positions 267–274 (GHVDAGKS) are G1. Residue 267 to 274 (GHVDAGKS) coordinates GTP. The interval 323–327 (GKTIE) is G2. Residues 344–347 (DAPG) form a G3 region. GTP contacts are provided by residues 406 to 409 (NKMD) and 449 to 450 (GY). A G4 region spans residues 406 to 409 (NKMD). A G5 region spans residues 448-450 (SGY). A Phosphoserine modification is found at serine 571.

This sequence belongs to the TRAFAC class translation factor GTPase superfamily. Classic translation factor GTPase family. ERF3 subfamily. In terms of assembly, heterodimer of two subunits, one of which binds GTP. Interacts with polyadenylate-binding protein PAB1, and TPA1.

Its subcellular location is the cytoplasm. The enzyme catalyses GTP + H2O = GDP + phosphate + H(+). Functionally, GTPase component of the eRF1-eRF3-GTP ternary complex, a ternary complex that mediates translation termination in response to the termination codons UAA, UAG and UGA. SUP35/eRF3 mediates SUP45/eRF1 delivery to stop codons: The eRF1-eRF3-GTP complex binds to a stop codon in the ribosomal A-site. GTP hydrolysis by SUP35/eRF3 induces a conformational change that leads to its dissociation, permitting SUP45/eRF1 to accommodate fully in the A-site. Recruited by polyadenylate-binding protein PAB1 to poly(A)-tails of mRNAs. Interaction with PAB1 is also required for regulation of normal mRNA decay through translation termination-coupled poly(A) shortening. This chain is Eukaryotic peptide chain release factor GTP-binding subunit (SUP35), found in Saccharomyces cerevisiae (strain ATCC 204508 / S288c) (Baker's yeast).